The chain runs to 227 residues: Holliday junction branch migration complex subunit RuvA (227 aa).

The interval 1-64 (MFESISGILT…EDALRLFGFS (64 aa)) is domain I. Residues 65 to 143 (NVQERTLFLS…LTDAASCAQS (79 aa)) form a domain II region. Positions 144–158 (QTDDRAAHPSNLGCA) are flexible linker. The interval 159-227 (PHAREIEDLV…HPHAVAPAAE (69 aa)) is domain III.

The protein belongs to the RuvA family. Homotetramer. Forms an RuvA(8)-RuvB(12)-Holliday junction (HJ) complex. HJ DNA is sandwiched between 2 RuvA tetramers; dsDNA enters through RuvA and exits via RuvB. An RuvB hexamer assembles on each DNA strand where it exits the tetramer. Each RuvB hexamer is contacted by two RuvA subunits (via domain III) on 2 adjacent RuvB subunits; this complex drives branch migration. In the full resolvosome a probable DNA-RuvA(4)-RuvB(12)-RuvC(2) complex forms which resolves the HJ.

The protein localises to the cytoplasm. In terms of biological role, the RuvA-RuvB-RuvC complex processes Holliday junction (HJ) DNA during genetic recombination and DNA repair, while the RuvA-RuvB complex plays an important role in the rescue of blocked DNA replication forks via replication fork reversal (RFR). RuvA specifically binds to HJ cruciform DNA, conferring on it an open structure. The RuvB hexamer acts as an ATP-dependent pump, pulling dsDNA into and through the RuvAB complex. HJ branch migration allows RuvC to scan DNA until it finds its consensus sequence, where it cleaves and resolves the cruciform DNA. This chain is Holliday junction branch migration complex subunit RuvA, found in Treponema pallidum (strain Nichols).